The sequence spans 264 residues: MKQYLDLMKKVLEEGTPKADRTGTGTRSIFGHQMRFNLQDGFPLVTTKKCHLRSIIHELLWFLNGDTNVAYLHENKVSIWDEWADENGDLGPVYGKQWRSWGAADGRQIDQLKNVLTQLRQDPDSRRIIVSAWNVGELDKMALAPCHAFFQFYVADGKLSCQLYQRSCDIFLGLPFNIASYALLVHMVAQQCDLDVGDFVWTGGDTHLYNNHLEQTQLQLSREPRALPKLVIKRRPDTLFDYRFEDFEIEGYDPHPTIKAPVAI.

Arg-21 provides a ligand contact to dUMP. Residue His-51 coordinates (6R)-5,10-methylene-5,6,7,8-tetrahydrofolate. 126–127 lines the dUMP pocket; sequence RR. The active-site Nucleophile is Cys-146. Residues 166–169, Asn-177, and 207–209 each bind dUMP; these read RSCD and HLY. Asp-169 provides a ligand contact to (6R)-5,10-methylene-5,6,7,8-tetrahydrofolate. Ala-263 contributes to the (6R)-5,10-methylene-5,6,7,8-tetrahydrofolate binding site.

The protein belongs to the thymidylate synthase family. Bacterial-type ThyA subfamily. As to quaternary structure, homodimer.

It is found in the cytoplasm. The catalysed reaction is dUMP + (6R)-5,10-methylene-5,6,7,8-tetrahydrofolate = 7,8-dihydrofolate + dTMP. The protein operates within pyrimidine metabolism; dTTP biosynthesis. Its function is as follows. Catalyzes the reductive methylation of 2'-deoxyuridine-5'-monophosphate (dUMP) to 2'-deoxythymidine-5'-monophosphate (dTMP) while utilizing 5,10-methylenetetrahydrofolate (mTHF) as the methyl donor and reductant in the reaction, yielding dihydrofolate (DHF) as a by-product. This enzymatic reaction provides an intracellular de novo source of dTMP, an essential precursor for DNA biosynthesis. The protein is Thymidylate synthase of Pectobacterium carotovorum subsp. carotovorum (strain PC1).